The following is a 227-amino-acid chain: Probable minor pilin MMP0600 (227 aa).

Positions 1-7 are excised as a propeptide; the sequence is MAKFSKG. The QXSXEXXXL signature appears at 8-16; the sequence is QISIELILL.

The N-terminus is probably cleaved by the prepilin peptidase EppA, which recognizes the class III signal sequence.

Its subcellular location is the secreted. It is found in the cell surface. The protein localises to the fimbrium. In Methanococcus maripaludis (strain DSM 14266 / JCM 13030 / NBRC 101832 / S2 / LL), this protein is Probable minor pilin MMP0600.